The primary structure comprises 338 residues: Protein SGT1 homolog (338 aa).

The residue at position 2 (Ala2) is an N-acetylalanine. TPR repeat units lie at residues 11–45, 46–79, and 80–113; these read AASR…KPDD, APYY…NPNS, and STAL…NSAD. Residues 142–231 enclose the CS domain; that stretch reads QSKIKYDWYQ…PEAVRWEKLE (90 aa). The SGS domain maps to 249-338; sequence LYPSSSHYTR…PPDDMEWKKY (90 aa). At Ser254 the chain carries Phosphoserine. Thr257 is subject to Phosphothreonine. Lys268 is covalently cross-linked (Glycyl lysine isopeptide (Lys-Gly) (interchain with G-Cter in SUMO1); alternate). Lys268 is covalently cross-linked (Glycyl lysine isopeptide (Lys-Gly) (interchain with G-Cter in SUMO2); alternate). Ser304 carries the post-translational modification Phosphoserine.

This sequence belongs to the SGT1 family. As to quaternary structure, probably associates with SCF (SKP1-CUL1-F-box protein) complex through interaction with SKP1. Interacts with S100A6. Interacts with HSP90. Post-translationally, phosphorylated at Ser-254 and Ser-304, dephosphorylation promotes nuclear translocation, most likely due to disruption of the SUGT1-HSP90 complex.

Its subcellular location is the cytoplasm. The protein resides in the nucleus. In terms of biological role, may play a role in ubiquitination and subsequent proteasomal degradation of target proteins. In Bos taurus (Bovine), this protein is Protein SGT1 homolog.